A 436-amino-acid chain; its full sequence is Adenylosuccinate synthetase (436 aa).

Residues 12 to 18 (GDEGKGK) and 40 to 42 (GHT) contribute to the GTP site. The active-site Proton acceptor is D13. Residues D13 and G40 each contribute to the Mg(2+) site. Residues 13 to 16 (DEGK), 38 to 41 (NAGH), T128, R142, Q223, T238, and R302 contribute to the IMP site. H41 (proton donor) is an active-site residue. 298-304 (TTTGRRR) is a binding site for substrate. GTP is bound by residues R304, 330–332 (KLD), and 412–414 (SLG).

Belongs to the adenylosuccinate synthetase family. Homodimer. Mg(2+) is required as a cofactor.

The protein localises to the cytoplasm. It carries out the reaction IMP + L-aspartate + GTP = N(6)-(1,2-dicarboxyethyl)-AMP + GDP + phosphate + 2 H(+). The protein operates within purine metabolism; AMP biosynthesis via de novo pathway; AMP from IMP: step 1/2. In terms of biological role, plays an important role in the de novo pathway of purine nucleotide biosynthesis. Catalyzes the first committed step in the biosynthesis of AMP from IMP. This Prochlorococcus marinus (strain MIT 9301) protein is Adenylosuccinate synthetase.